A 274-amino-acid chain; its full sequence is Large ribosomal subunit protein uL2 (274 aa).

Positions 223–274 (VAMNPVDHPHGGGEGRTSGGRHPVTPWGVPTKGYKTRSNKRTDKYIVRRRNK) are disordered.

It belongs to the universal ribosomal protein uL2 family. In terms of assembly, part of the 50S ribosomal subunit. Forms a bridge to the 30S subunit in the 70S ribosome.

Functionally, one of the primary rRNA binding proteins. Required for association of the 30S and 50S subunits to form the 70S ribosome, for tRNA binding and peptide bond formation. It has been suggested to have peptidyltransferase activity; this is somewhat controversial. Makes several contacts with the 16S rRNA in the 70S ribosome. This chain is Large ribosomal subunit protein uL2, found in Shewanella oneidensis (strain ATCC 700550 / JCM 31522 / CIP 106686 / LMG 19005 / NCIMB 14063 / MR-1).